Consider the following 346-residue polypeptide: Putative transmembrane protein ORF346 (346 aa).

A run of 6 helical transmembrane segments spans residues 67 to 87, 104 to 124, 134 to 154, 156 to 176, 181 to 201, and 219 to 241; these read LPII…CIVY, IINP…VGLT, PPYL…SGIY, AIGD…GLFI, IILY…LCLS, and YPFS…LGSY. The interval 294-346 is disordered; that stretch reads SEYPHSENGSGGSGGSGSGSGSGGSGSGGNSGSGGSGSGSSGSGGNSGSGNNG. Gly residues predominate over residues 302–346; sequence GSGGSGGSGSGSGSGGSGSGGNSGSGGSGSGSSGSGGNSGSGNNG.

The protein resides in the host membrane. The sequence is that of Putative transmembrane protein ORF346 from Acidianus bottle-shaped virus (isolate Italy/Pozzuoli) (ABV).